Consider the following 512-residue polypeptide: GMP synthase [glutamine-hydrolyzing] (512 aa).

The Glutamine amidotransferase type-1 domain occupies 6–195 (KIIILDFGSQ…VFNICGCQPK (190 aa)). The active-site Nucleophile is the C83. Active-site residues include H169 and E171. Residues 196–387 (WKITEFISAA…LGIDFKFVYK (192 aa)) form the GMPS ATP-PPase domain. Residue 223-229 (SGGVDSS) coordinates ATP.

Homodimer.

It catalyses the reaction XMP + L-glutamine + ATP + H2O = GMP + L-glutamate + AMP + diphosphate + 2 H(+). Its pathway is purine metabolism; GMP biosynthesis; GMP from XMP (L-Gln route): step 1/1. Its function is as follows. Catalyzes the synthesis of GMP from XMP. The sequence is that of GMP synthase [glutamine-hydrolyzing] from Spiroplasma kunkelii.